The sequence spans 505 residues: MKMILFNQNPMITKLLESVSKKLELPIENFNHYQELSARLKENQEWLLIADDECLEKLDQVDWLELKETISQNKNSVCMYKKGNEAQPFLEGFEVKIKKPFLPTEMLKVLQKKLGSNASELEPSQNLDPTQEVLETNWDELENLGDLEALVQEEPNNEEQLLPTLNDQEEKEEVKEEEKEEVKEEEKEEVKEEEKEEVKETPQEEKKPKDDETQEGETLKDKEVSKELEAPQELEIPKEETQEQDPIKEETQENKEEKQEKTQDSPSAQELEAMQELVKEIQENSNGQENKEKTQESAEIPQDKEIQEVVTEKTQAQELEVPKEKTQESAEALQETQAHELEKQEIAETPQDVEIPQSQDKEVQELEIPKEETQENTETPQDVETPQEKETQEDHYESIEDIPEPVMAKAMGEELPFLNEAVAKIPNNENDTETPKESVTETSKNENNTETPQEKEESDKTSSPLELRLNLQDLLKSLNQESLKSLLENKTLSIKITLEDKKPNA.

Disordered stretches follow at residues 154–403 (EPNN…EDIP) and 420–465 (EAVA…SSPL). Composition is skewed to basic and acidic residues over residues 172 to 263 (EEVK…EKTQ), 289 to 311 (ENKEKTQESAEIPQDKEIQEVVT), 337 to 346 (QAHELEKQEI), 359 to 373 (QDKEVQELEIPKEET), and 386 to 398 (PQEKETQEDHYES). Over residues 440–451 (TETSKNENNTET) the composition is skewed to low complexity.

In terms of assembly, interacts with CheZ; the interaction is essential for each other polar localization.

The protein resides in the cytoplasm. Plays an essential role in chemotaxis. Regulates flagellar rotation through the formation of a complex with chemotaxis protein CheZ. Plays a major role in colonization of the stomach. The chain is Chemotaxis regulatory protein ChePep from Helicobacter pylori (strain ATCC 700392 / 26695) (Campylobacter pylori).